We begin with the raw amino-acid sequence, 167 residues long: Methylated-DNA--protein-cysteine methyltransferase (167 aa).

C128 functions as the Nucleophile; methyl group acceptor in the catalytic mechanism.

Belongs to the MGMT family.

It localises to the cytoplasm. It carries out the reaction a 6-O-methyl-2'-deoxyguanosine in DNA + L-cysteinyl-[protein] = S-methyl-L-cysteinyl-[protein] + a 2'-deoxyguanosine in DNA. The enzyme catalyses a 4-O-methyl-thymidine in DNA + L-cysteinyl-[protein] = a thymidine in DNA + S-methyl-L-cysteinyl-[protein]. Functionally, involved in the cellular defense against the biological effects of O6-methylguanine (O6-MeG) and O4-methylthymine (O4-MeT) in DNA. Repairs the methylated nucleobase in DNA by stoichiometrically transferring the methyl group to a cysteine residue in the enzyme. This is a suicide reaction: the enzyme is irreversibly inactivated. The sequence is that of Methylated-DNA--protein-cysteine methyltransferase from Methanocaldococcus jannaschii (strain ATCC 43067 / DSM 2661 / JAL-1 / JCM 10045 / NBRC 100440) (Methanococcus jannaschii).